We begin with the raw amino-acid sequence, 409 residues long: Effector protein BipC (409 aa).

2 disordered regions span residues 268–287 (RETGESVRHEIDPGGERMSD) and 330–396 (SGGQ…VAND). Residues 360-369 (AQQTAMAAAS) show a composition bias toward low complexity. Basic and acidic residues predominate over residues 370–382 (ARDEAAHRGRDAA).

It belongs to the SctB/SipC family.

The protein localises to the secreted. The protein is Effector protein BipC (bipC) of Burkholderia thailandensis (strain ATCC 700388 / DSM 13276 / CCUG 48851 / CIP 106301 / E264).